A 542-amino-acid chain; its full sequence is Protein OS-9 homolog (542 aa).

Residues Met-1–Ser-21 form the signal peptide. 2 N-linked (GlcNAc...) asparagine glycosylation sites follow: Asn-52 and Asn-74. 4 cysteine pairs are disulfide-bonded: Cys-70/Cys-258, Cys-117/Cys-130, Cys-193/Cys-227, and Cys-208/Cys-239. The MRH domain maps to Glu-115–Leu-241. Trp-125, Gln-137, Asp-194, Arg-200, Glu-223, and Tyr-229 together coordinate a mannooligosaccharide derivative. The N-linked (GlcNAc...) asparagine glycan is linked to Asn-380. The tract at residues Asn-497 to Val-528 is disordered. Basic and acidic residues predominate over residues Ser-505–Gly-514. Residues Gly-517–Val-528 are compositionally biased toward polar residues. The Prevents secretion from ER signature appears at His-539–Leu-542.

It belongs to the OS-9 family. As to quaternary structure, homodimer. Component of the HRD1 ubiquitin ligase complex which contains the E3 ligase HRD1, its cofactors HRD3, USA1 and DER1, substrate recruiting factor YOS9 and CDC48-binding protein UBX2. Within the complex, interacts (via N-terminus) with HRD3. In ERAD-L, HRD3 and YOS9 jointly bind misfolded glycoproteins in the endoplasmic reticulum (ER) lumen. Movement of ERAD-L substrates through the ER membrane is facilitated by HRD1 and DER1 which have lateral gates facing each other and which distort the membrane region between the lateral gates, making it much thinner than a normal phospholipid bilayer. Substrates insert into the membrane as a hairpin loop with one strand interacting with DER1 and the other with HRD1. The HRD1 complex interacts with the heterotrimeric CDC48-NPL4-UFD1 ATPase complex which is recruited by UBX2 via its interaction with CDC48 and which moves ubiquitinated substrates to the cytosol for targeting to the proteasome. Interacts with KAR2 and EMP47. Interacts with misfolded ER lumenal proteins like PCR1. Interacts with the GPI-anchored proteins GAS1 and MKC7.

The protein localises to the endoplasmic reticulum membrane. Its function is as follows. Lectin involved in the quality control of the secretory pathway. As a member of the endoplasmic reticulum-associated degradation lumenal (ERAD-L) surveillance system, targets misfolded endoplasmic reticulum lumenal glycoproteins for degradation. The recognition of targets is N-glycan specific. Functions in recruiting misfolded protein substrates in conjunction with HRD3. This Saccharomyces cerevisiae (strain ATCC 204508 / S288c) (Baker's yeast) protein is Protein OS-9 homolog (YOS9).